Consider the following 177-residue polypeptide: Nicotinamide-nucleotide adenylyltransferase (177 aa).

It belongs to the archaeal NMN adenylyltransferase family.

Its subcellular location is the cytoplasm. It catalyses the reaction beta-nicotinamide D-ribonucleotide + ATP + H(+) = diphosphate + NAD(+). The protein operates within cofactor biosynthesis; NAD(+) biosynthesis; NAD(+) from nicotinamide D-ribonucleotide: step 1/1. The polypeptide is Nicotinamide-nucleotide adenylyltransferase (Halobacterium salinarum (strain ATCC 29341 / DSM 671 / R1)).